The chain runs to 189 residues: dTTP/UTP pyrophosphatase (189 aa).

Asp71 acts as the Proton acceptor in catalysis.

Belongs to the Maf family. YhdE subfamily. A divalent metal cation is required as a cofactor.

The protein resides in the cytoplasm. It carries out the reaction dTTP + H2O = dTMP + diphosphate + H(+). The enzyme catalyses UTP + H2O = UMP + diphosphate + H(+). Nucleoside triphosphate pyrophosphatase that hydrolyzes dTTP and UTP. May have a dual role in cell division arrest and in preventing the incorporation of modified nucleotides into cellular nucleic acids. In Pseudoalteromonas translucida (strain TAC 125), this protein is dTTP/UTP pyrophosphatase.